Reading from the N-terminus, the 94-residue chain is Integration host factor subunit beta (94 aa).

This sequence belongs to the bacterial histone-like protein family. In terms of assembly, heterodimer of an alpha and a beta chain.

Its function is as follows. This protein is one of the two subunits of integration host factor, a specific DNA-binding protein that functions in genetic recombination as well as in transcriptional and translational control. This chain is Integration host factor subunit beta, found in Caulobacter sp. (strain K31).